Consider the following 1111-residue polypeptide: MFNPMTPPQVNSYSEPCCLRPLHSQGVPSMGTEGLSGLPFCHQANFMSGSQGYGAARETSSCTEGSLFPPPPPPRSSVKLTKKRALSISPLSDASLDLQTVIRTSPSSLVAFINSRCTSPGGSYGHLSIGTMSPSLGFPPQMSHQKGTSPPYGVQPCVPHDSTRGSMMLHPQSRGPRATCQLKSELDMMVGKCPEDPLEGDMSSPNSTGTQDHLLGMLDGREDLEREEKPEPESVYETDCRWDGCSQEFDSQEQLVHHINSEHIHGERKEFVCHWGGCSRELRPFKAQYMLVVHMRRHTGEKPHKCTFEGCRKSYSRLENLKTHLRSHTGEKPYMCEQEGCSKAFSNASDRAKHQNRTHSNEKPYVCKLPGCTKRYTDPSSLRKHVKTVHGPDAHVTKRHRGDGPLPRAQPLSTVEPKREREGGSGREESRLTVPESAMPQQSPGAQSSCSSDHSPAGSAANTDSGVEMAGNAGGSTEDLSSLDEGPCVSATGLSTLRRLENLRLDQLHQLRPIGSRGLKLPSLTHAGAPVSRRLGPPVSLDRRSSSSSSMSSAYTVSRRSSLASPFPPGTPPENGASSLPGLTPAQHYMLRARYASARGSGTPPTAAHSLDRMGGLSVPPWRSRTEYPGYNPNAGVTRRASDPARAADHPAPARVQRFKSLGCVHTPPSVATGRNFDPHHPTSVYSPQPPSITENVAMDTRGLQEEPEVGTSVMGNGLNPYMDFSSTDTLGYGGPEGTAAEPYEARGPGSLPLGPGPPTNYGPGHCAQQVSYPDPTPENWGEFPSHAGVYPSNKAPGAAYSQCPRLEHYGQVQVKPEQGCPVGSDSTGLAPCLNAHPSEGSPGPQPLFSHHPQLPQPQYPQSGPYPQPPHGYLSTEPRLGLNFNPSSSHSTGQLKAQLVCNYVQSQQELLWEGRNRGGLPNQELPYQSPKFLGGSQVSQSPAKTPAAAAAAYGSGFAPASANHKSGSYPAPSPCHETFTVGVNRPSHRPAAPPRLLPPLSPCYGPLKVGDTNPSCGHPEVGRLGAGPALYPPPEGQVCNALDSLDLDNTQLDFVAILDEAQGLSPPLSHEQGDSSKNTPSPSGPPNMAVGNMSVLLGSLPGETQFLNSSA.

Positions 52–78 (GYGAARETSSCTEGSLFPPPPPPRSSV) are disordered. The segment at 123–127 (SYGHL) is interaction with SUFU. 5 consecutive C2H2-type zinc fingers follow at residues 238-263 (TDCR…NSEH), 271-298 (FVCH…MRRH), 304-328 (HKCT…LRSH), 334-359 (YMCE…NRTH), and 365-390 (YVCK…KTVH). Residues 286-294 (KAQYMLVVH) form an interaction with DNA region. 2 interaction with DNA regions span residues 348–353 (ASDRAK) and 378–384 (DPSSLRK). The segment at 378–487 (DPSSLRKHVK…EDLSSLDEGP (110 aa)) is disordered. The span at 416–431 (EPKREREGGSGREESR) shows a compositional bias: basic and acidic residues. Residues 439–465 (MPQQSPGAQSSCSSDHSPAGSAANTDS) show a composition bias toward polar residues. Position 520 is an N6-acetyllysine (lysine 520). 4 disordered regions span residues 528-583 (GAPV…LPGL), 598-649 (ARGS…RAAD), 673-692 (TGRN…QPPS), and 832-891 (PCLN…SSHS). Positions 546 to 562 (SSSSSMSSAYTVSRRSS) are enriched in low complexity. The span at 640-649 (RASDPARAAD) shows a compositional bias: basic and acidic residues. Positions 855-870 (LPQPQYPQSGPYPQPP) are enriched in pro residues. Lysine 1008 is covalently cross-linked (Glycyl lysine isopeptide (Lys-Gly) (interchain with G-Cter in SUMO2)). The disordered stretch occupies residues 1064-1093 (LSPPLSHEQGDSSKNTPSPSGPPNMAVGNM).

This sequence belongs to the GLI C2H2-type zinc-finger protein family. As to quaternary structure, interacts with KIF7. Interacts with STK36. Interacts with ZIC1; the interaction enhances transcription activation. Interacts with SUFU; this inhibits transcriptional activation by GLI1. In terms of processing, phosphorylated in vitro by ULK3. Acetylation at Lys-520 down-regulates transcriptional activity. Deacetylated by HDAC1. Post-translationally, ubiquitinated by the CRL2(FEM1B) complex, suppressing GLI1 transcriptional activator activity.

Its subcellular location is the cytoplasm. It is found in the nucleus. Functionally, acts as a transcriptional activator. Binds to the DNA consensus sequence 5'-GACCACCCA-3'. Regulates the transcription of specific genes during normal development. Plays a role in craniofacial development and digital development, as well as development of the central nervous system and gastrointestinal tract. Mediates SHH signaling. Plays a role in cell proliferation and differentiation via its role in SHH signaling. In Mus musculus (Mouse), this protein is Zinc finger protein GLI1 (Gli1).